A 377-amino-acid polypeptide reads, in one-letter code: Erythronate-4-phosphate dehydrogenase (377 aa).

Ser-45 and Thr-66 together coordinate substrate. NAD(+) is bound by residues Asp-146 and Thr-175. Arg-208 is an active-site residue. NAD(+) is bound at residue Asp-232. The active site involves Glu-237. The active-site Proton donor is His-254. Position 257 (Gly-257) interacts with NAD(+). Tyr-258 serves as a coordination point for substrate.

It belongs to the D-isomer specific 2-hydroxyacid dehydrogenase family. PdxB subfamily. Homodimer.

The protein resides in the cytoplasm. It catalyses the reaction 4-phospho-D-erythronate + NAD(+) = (R)-3-hydroxy-2-oxo-4-phosphooxybutanoate + NADH + H(+). It participates in cofactor biosynthesis; pyridoxine 5'-phosphate biosynthesis; pyridoxine 5'-phosphate from D-erythrose 4-phosphate: step 2/5. In terms of biological role, catalyzes the oxidation of erythronate-4-phosphate to 3-hydroxy-2-oxo-4-phosphonooxybutanoate. This chain is Erythronate-4-phosphate dehydrogenase, found in Sodalis glossinidius (strain morsitans).